The sequence spans 338 residues: Glycerol-3-phosphate dehydrogenase [NAD(P)+] (338 aa).

The NADPH site is built by Ser13, Trp14, and Lys108. The sn-glycerol 3-phosphate site is built by Lys108, Gly139, and Ser141. Residue Ala143 participates in NADPH binding. Residues Lys194, Asp247, Ser257, Arg258, and Asn259 each coordinate sn-glycerol 3-phosphate. The active-site Proton acceptor is the Lys194. Arg258 serves as a coordination point for NADPH. 2 residues coordinate NADPH: Val282 and Glu284.

The protein belongs to the NAD-dependent glycerol-3-phosphate dehydrogenase family.

The protein localises to the cytoplasm. It carries out the reaction sn-glycerol 3-phosphate + NAD(+) = dihydroxyacetone phosphate + NADH + H(+). It catalyses the reaction sn-glycerol 3-phosphate + NADP(+) = dihydroxyacetone phosphate + NADPH + H(+). Its pathway is membrane lipid metabolism; glycerophospholipid metabolism. In terms of biological role, catalyzes the reduction of the glycolytic intermediate dihydroxyacetone phosphate (DHAP) to sn-glycerol 3-phosphate (G3P), the key precursor for phospholipid synthesis. This Listeria monocytogenes serotype 4a (strain HCC23) protein is Glycerol-3-phosphate dehydrogenase [NAD(P)+].